The following is a 29-amino-acid chain: Cytochrome b6-f complex subunit 8 (29 aa).

Residues isoleucine 3 to valine 23 form a helical membrane-spanning segment.

The protein belongs to the PetN family. In terms of assembly, the 4 large subunits of the cytochrome b6-f complex are cytochrome b6, subunit IV (17 kDa polypeptide, PetD), cytochrome f and the Rieske protein, while the 4 small subunits are PetG, PetL, PetM and PetN. The complex functions as a dimer.

The protein localises to the cellular thylakoid membrane. Component of the cytochrome b6-f complex, which mediates electron transfer between photosystem II (PSII) and photosystem I (PSI), cyclic electron flow around PSI, and state transitions. The protein is Cytochrome b6-f complex subunit 8 of Nostoc punctiforme (strain ATCC 29133 / PCC 73102).